The sequence spans 399 residues: UDP-galactopyranose mutase (399 aa).

FAD is bound by residues Ser25, 44–45, Asn52, and 71–72; these read EK and HI. Residues Ser171, Trp175, Tyr200, Asn297, Arg306, and Tyr345 each contribute to the UDP-alpha-D-galactose site. Arg374 contributes to the FAD binding site. Residue Tyr380 coordinates UDP-alpha-D-galactose. 381–386 is a binding site for FAD; the sequence is IDMDRA.

It belongs to the UDP-galactopyranose/dTDP-fucopyranose mutase family. Requires FAD as cofactor.

The catalysed reaction is UDP-alpha-D-galactose = UDP-alpha-D-galactofuranose. Its function is as follows. Involved in the conversion of UDP-GalP into UDP-GalF through a 2-keto intermediate. The polypeptide is UDP-galactopyranose mutase (glf) (Mycoplasma pneumoniae (strain ATCC 29342 / M129 / Subtype 1) (Mycoplasmoides pneumoniae)).